We begin with the raw amino-acid sequence, 196 residues long: Molybdenum cofactor guanylyltransferase (196 aa).

Residues 10–12 (LAG), Lys23, Asn51, Asp69, and Asp99 each bind GTP. Asp99 contributes to the Mg(2+) binding site.

This sequence belongs to the MobA family. As to quaternary structure, monomer. It depends on Mg(2+) as a cofactor.

The protein localises to the cytoplasm. The catalysed reaction is Mo-molybdopterin + GTP + H(+) = Mo-molybdopterin guanine dinucleotide + diphosphate. In terms of biological role, transfers a GMP moiety from GTP to Mo-molybdopterin (Mo-MPT) cofactor (Moco or molybdenum cofactor) to form Mo-molybdopterin guanine dinucleotide (Mo-MGD) cofactor. The chain is Molybdenum cofactor guanylyltransferase from Shewanella baltica (strain OS185).